The following is a 569-amino-acid chain: Urease subunit alpha (569 aa).

The Urease domain maps to 131-569; sequence GGIDTHIHFI…LPLAQRYLLL (439 aa). Ni(2+) contacts are provided by histidine 136, histidine 138, and lysine 219. Lysine 219 carries the post-translational modification N6-carboxylysine. Histidine 221 lines the substrate pocket. Ni(2+)-binding residues include histidine 248 and histidine 274. Histidine 322 acts as the Proton donor in catalysis. Aspartate 362 is a Ni(2+) binding site.

Belongs to the metallo-dependent hydrolases superfamily. Urease alpha subunit family. Heterotrimer of UreA (gamma), UreB (beta) and UreC (alpha) subunits. Three heterotrimers associate to form the active enzyme. Ni cation serves as cofactor. Carboxylation allows a single lysine to coordinate two nickel ions.

It is found in the cytoplasm. It catalyses the reaction urea + 2 H2O + H(+) = hydrogencarbonate + 2 NH4(+). The protein operates within nitrogen metabolism; urea degradation; CO(2) and NH(3) from urea (urease route): step 1/1. The chain is Urease subunit alpha from Synechococcus sp. (strain CC9311).